Reading from the N-terminus, the 707-residue chain is Protein kinase C theta type (707 aa).

The 107-residue stretch at 1–107 folds into the C2 domain; the sequence is MSPFLRIGLS…KNNGRTEIWL (107 aa). Residue tyrosine 90 is modified to Phosphotyrosine; by LCK. A Phorbol-ester/DAG-type 1 zinc finger spans residues 159-209; it reads CHEFTATFFPQPTFCSVCHEFVWGLNKQGYQCRQCNAAIHKKCIDKVIAKC. A Phosphothreonine; by autocatalysis modification is found at threonine 219. The segment at 231 to 281 adopts a Phorbol-ester/DAG-type 2 zinc-finger fold; it reads PHRFKVYNYKSPTFCEHCGTLLWGLARQGLKCDACGMNVHHRCQTKVANLC. Residues 327–365 form a disordered region; that stretch reads ETRPPCVPTPGKREPQGISWDSPLDGSNKSAGPPEPEVS. Phosphoserine is present on serine 348. One can recognise a Protein kinase domain in the interval 380–634; sequence FILHKMLGKG…RGDIRQHPLF (255 aa). ATP is bound by residues 386 to 394 and lysine 409; that span reads LGKGSFGKV. Residue aspartate 504 is the Proton acceptor of the active site. A Phosphothreonine; by PDPK1 modification is found at threonine 538. The AGC-kinase C-terminal domain occupies 635 to 706; it reads REINWEELER…INPGMETLIC (72 aa). A Phosphoserine; by autocatalysis modification is found at serine 676. Serine 685 is modified (phosphoserine). The residue at position 695 (serine 695) is a Phosphoserine; by autocatalysis.

Belongs to the protein kinase superfamily. AGC Ser/Thr protein kinase family. PKC subfamily. In terms of assembly, part of a membrane raft complex composed at least of BCL10, CARD11, MALT1 and IKBKB. Interacts with GLRX3 (via N-terminus). Interacts with ECT2. Interacts with CCDC88A/GIV; the interaction leads to phosphorylation of CCDC88A and inhibition of its guanine nucleotide exchange factor activity. Interacts with CD28. Mg(2+) is required as a cofactor. Post-translationally, autophosphorylation at Thr-219 is required for targeting to the TCR and cellular function of PRKCQ upon antigen receptor ligation. Following TCR stimulation, phosphorylated at Tyr-90 and Ser-685. In terms of tissue distribution, T-lymphocytes and skeletal muscle.

The protein localises to the cytoplasm. Its subcellular location is the cell membrane. The enzyme catalyses L-seryl-[protein] + ATP = O-phospho-L-seryl-[protein] + ADP + H(+). It catalyses the reaction L-threonyl-[protein] + ATP = O-phospho-L-threonyl-[protein] + ADP + H(+). With respect to regulation, novel PKCs (PRKCD, PRKCE, PRKCH and PRKCQ) are calcium-insensitive, but activated by diacylglycerol (DAG) and phosphatidylserine. Three specific sites; Thr-538 (activation loop of the kinase domain), Ser-676 (turn motif) and Ser-695 (hydrophobic region), need to be phosphorylated for its full activation. Functionally, calcium-independent, phospholipid- and diacylglycerol (DAG)-dependent serine/threonine-protein kinase that mediates non-redundant functions in T-cell receptor (TCR) signaling, including T-cells activation, proliferation, differentiation and survival, by mediating activation of multiple transcription factors such as NF-kappa-B, JUN, NFATC1 and NFATC2. In TCR-CD3/CD28-co-stimulated T-cells, is required for the activation of NF-kappa-B and JUN, which in turn are essential for IL2 production, and participates in the calcium-dependent NFATC1 and NFATC2 transactivation. Mediates the activation of the canonical NF-kappa-B pathway (NFKB1) by direct phosphorylation of CARD11 on several serine residues, inducing CARD11 association with lipid rafts and recruitment of the BCL10-MALT1 complex, which then activates IKK complex, resulting in nuclear translocation and activation of NFKB1. May also play an indirect role in activation of the non-canonical NF-kappa-B (NFKB2) pathway. In the signaling pathway leading to JUN activation, acts by phosphorylating the mediator STK39/SPAK and may not act through MAP kinases signaling. Plays a critical role in TCR/CD28-induced NFATC1 and NFATC2 transactivation by participating in the regulation of reduced inositol 1,4,5-trisphosphate generation and intracellular calcium mobilization. After costimulation of T-cells through CD28 can phosphorylate CBLB and is required for the ubiquitination and subsequent degradation of CBLB, which is a prerequisite for the activation of TCR. During T-cells differentiation, plays an important role in the development of T-helper 2 (Th2) cells following immune and inflammatory responses, and, in the development of inflammatory autoimmune diseases, is necessary for the activation of IL17-producing Th17 cells. May play a minor role in Th1 response. Upon TCR stimulation, mediates T-cell protective survival signal by phosphorylating BAD, thus protecting T-cells from BAD-induced apoptosis, and by up-regulating BCL-X(L)/BCL2L1 levels through NF-kappa-B and JUN pathways. In platelets, regulates signal transduction downstream of the ITGA2B, CD36/GP4, F2R/PAR1 and F2RL3/PAR4 receptors, playing a positive role in 'outside-in' signaling and granule secretion signal transduction. May relay signals from the activated ITGA2B receptor by regulating the uncoupling of WASP and WIPF1, thereby permitting the regulation of actin filament nucleation and branching activity of the Arp2/3 complex. May mediate inhibitory effects of free fatty acids on insulin signaling by phosphorylating IRS1, which in turn blocks IRS1 tyrosine phosphorylation and downstream activation of the PI3K/AKT pathway. Phosphorylates MSN (moesin) in the presence of phosphatidylglycerol or phosphatidylinositol. Phosphorylates PDPK1 at 'Ser-504' and 'Ser-532' and negatively regulates its ability to phosphorylate PKB/AKT1. Phosphorylates CCDC88A/GIV and inhibits its guanine nucleotide exchange factor activity. Phosphorylates and activates LRRK1, which phosphorylates RAB proteins involved in intracellular trafficking. The protein is Protein kinase C theta type (Prkcq) of Mus musculus (Mouse).